A 216-amino-acid polypeptide reads, in one-letter code: ATP-dependent dethiobiotin synthetase BioD (216 aa).

12–17 (NVGKTF) is an ATP binding site. Thr16 contributes to the Mg(2+) binding site. Lys36 is a catalytic residue. Ser40 is a substrate binding site. ATP is bound by residues Asp53, 110–113 (EGAG), and 170–171 (NQ). Positions 53 and 110 each coordinate Mg(2+).

This sequence belongs to the dethiobiotin synthetase family. Homodimer. It depends on Mg(2+) as a cofactor.

It is found in the cytoplasm. The catalysed reaction is (7R,8S)-7,8-diammoniononanoate + CO2 + ATP = (4R,5S)-dethiobiotin + ADP + phosphate + 3 H(+). The protein operates within cofactor biosynthesis; biotin biosynthesis; biotin from 7,8-diaminononanoate: step 1/2. In terms of biological role, catalyzes a mechanistically unusual reaction, the ATP-dependent insertion of CO2 between the N7 and N8 nitrogen atoms of 7,8-diaminopelargonic acid (DAPA, also called 7,8-diammoniononanoate) to form a ureido ring. The protein is ATP-dependent dethiobiotin synthetase BioD of Vesicomyosocius okutanii subsp. Calyptogena okutanii (strain HA).